The primary structure comprises 316 residues: Ribosomal RNA small subunit methyltransferase H (316 aa).

S-adenosyl-L-methionine contacts are provided by residues 35–37 (AGH), Asp55, Phe84, Asp105, and Gln112.

The protein belongs to the methyltransferase superfamily. RsmH family.

It is found in the cytoplasm. The catalysed reaction is cytidine(1402) in 16S rRNA + S-adenosyl-L-methionine = N(4)-methylcytidine(1402) in 16S rRNA + S-adenosyl-L-homocysteine + H(+). Specifically methylates the N4 position of cytidine in position 1402 (C1402) of 16S rRNA. This Streptococcus pneumoniae (strain ATCC 700669 / Spain 23F-1) protein is Ribosomal RNA small subunit methyltransferase H.